Reading from the N-terminus, the 258-residue chain is Enterotoxin type D (258 aa).

The signal sequence occupies residues 1 to 25 (MKKFNILIALLFFTSLVISPLNVKA). Residues Asp212, His248, His250, and Asp252 each contribute to the Zn(2+) site.

The protein belongs to the staphylococcal/streptococcal toxin family. In terms of assembly, homodimer; zinc-dependent. Interacts with MHC class II molecules composed of alpha/HLA-DRA and beta/HLA-DRB1 chains. It depends on Zn(2+) as a cofactor.

It is found in the secreted. In terms of biological role, staphylococcal enterotoxin that activates the host immune system by binding as unprocessed molecules to major histocompatibility (MHC) complex class II and T-cell receptor (TCR) molecules. In turn, this ternary complex activates a large number of T-lymphocytes initiating a systemic release of pro-inflammatory cytokines. In addition, induces B-cell proliferation and differentiation in the presence of T-cells. Causes also the intoxication staphylococcal food poisoning syndrome. In Staphylococcus aureus, this protein is Enterotoxin type D (entD).